Here is a 290-residue protein sequence, read N- to C-terminus: Pyridoxal kinase PdxY (290 aa).

Substrate is bound by residues S9 and 44–45 (TQ). D112, V144, E149, and K182 together coordinate ATP. Residue D221 participates in substrate binding.

Belongs to the pyridoxine kinase family. PdxY subfamily. In terms of assembly, homodimer. Mg(2+) serves as cofactor.

It carries out the reaction pyridoxal + ATP = pyridoxal 5'-phosphate + ADP + H(+). It functions in the pathway cofactor metabolism; pyridoxal 5'-phosphate salvage; pyridoxal 5'-phosphate from pyridoxal: step 1/1. In terms of biological role, pyridoxal kinase involved in the salvage pathway of pyridoxal 5'-phosphate (PLP). Catalyzes the phosphorylation of pyridoxal to PLP. This Vibrio vulnificus (strain CMCP6) protein is Pyridoxal kinase PdxY.